A 404-amino-acid chain; its full sequence is Probable eukaryotic initiation factor 4A (404 aa).

Positions 1-28 are disordered; the sequence is MAQQGKVEPQDQDSFLDDQPGIRPIPSF. The Q motif signature appears at 26-54; it reads PSFDDMPLHQNLLRGIYSHGFEKPSSIQQ. Residues 57–231 enclose the Helicase ATP-binding domain; that stretch reads IVPFTRGGDI…KKFMRDPTRI (175 aa). An ATP-binding site is contributed by 70-77; it reads AQSGTGKT. The short motif at 179 to 182 is the DEAD box element; it reads DEAD. The Helicase C-terminal domain occupies 242–402; that stretch reads GIKQFFIAVE…ELPVDFAAYL (161 aa).

The protein belongs to the DEAD box helicase family. eIF4A subfamily. EIF4F is a multi-subunit complex, the composition of which varies with external and internal environmental conditions. It is composed of at least EIF4A, EIF4E and EIF4G.

It carries out the reaction ATP + H2O = ADP + phosphate + H(+). In terms of biological role, ATP-dependent RNA helicase which is a subunit of the eIF4F complex involved in cap recognition and is required for mRNA binding to ribosome. In the current model of translation initiation, eIF4A unwinds RNA secondary structures in the 5'-UTR of mRNAs which is necessary to allow efficient binding of the small ribosomal subunit, and subsequent scanning for the initiator codon. The chain is Probable eukaryotic initiation factor 4A from Trypanosoma brucei brucei (strain 927/4 GUTat10.1).